The chain runs to 146 residues: Hemoglobin subunit beta (146 aa).

The residue at position 1 (Val-1) is an N-acetylvaline. In terms of domain architecture, Globin spans 2-146; the sequence is HLTAEEKSAV…VATALAHKYH (145 aa). Thr-12 bears the Phosphothreonine mark. Residue Ser-44 is modified to Phosphoserine. Lys-59 bears the N6-acetyllysine mark. His-63 is a binding site for heme b. Lys-82 is subject to N6-acetyllysine. His-92 is a binding site for heme b. An S-nitrosocysteine modification is found at Cys-93. Lys-144 bears the N6-acetyllysine mark.

The protein belongs to the globin family. As to quaternary structure, heterotetramer of two alpha chains and two beta chains. Red blood cells.

Functionally, involved in oxygen transport from the lung to the various peripheral tissues. This is Hemoglobin subunit beta (HBB) from Cebus albifrons (White-fronted capuchin).